The chain runs to 715 residues: Polyribonucleotide nucleotidyltransferase (715 aa).

2 residues coordinate Mg(2+): Asp-488 and Asp-494. The KH domain occupies Pro-555–Ile-614. An S1 motif domain is found at Gly-624–Lys-692.

This sequence belongs to the polyribonucleotide nucleotidyltransferase family. Mg(2+) is required as a cofactor.

It is found in the cytoplasm. The catalysed reaction is RNA(n+1) + phosphate = RNA(n) + a ribonucleoside 5'-diphosphate. Its function is as follows. Involved in mRNA degradation. Catalyzes the phosphorolysis of single-stranded polyribonucleotides processively in the 3'- to 5'-direction. The polypeptide is Polyribonucleotide nucleotidyltransferase (Mesorhizobium japonicum (strain LMG 29417 / CECT 9101 / MAFF 303099) (Mesorhizobium loti (strain MAFF 303099))).